The sequence spans 245 residues: 1-(5-phosphoribosyl)-5-[(5-phosphoribosylamino)methylideneamino] imidazole-4-carboxamide isomerase (245 aa).

D7 (proton acceptor) is an active-site residue. D129 serves as the catalytic Proton donor.

It belongs to the HisA/HisF family.

It is found in the cytoplasm. It catalyses the reaction 1-(5-phospho-beta-D-ribosyl)-5-[(5-phospho-beta-D-ribosylamino)methylideneamino]imidazole-4-carboxamide = 5-[(5-phospho-1-deoxy-D-ribulos-1-ylimino)methylamino]-1-(5-phospho-beta-D-ribosyl)imidazole-4-carboxamide. It participates in amino-acid biosynthesis; L-histidine biosynthesis; L-histidine from 5-phospho-alpha-D-ribose 1-diphosphate: step 4/9. The sequence is that of 1-(5-phosphoribosyl)-5-[(5-phosphoribosylamino)methylideneamino] imidazole-4-carboxamide isomerase from Shewanella pealeana (strain ATCC 700345 / ANG-SQ1).